The sequence spans 315 residues: Calumenin-A (315 aa).

The signal sequence occupies residues 1 to 19 (MEIRPLLMCFALCVVYATS). EF-hand domains follow at residues 68-103 (ESKR…AQKK), 104-139 (YIYE…TYLD), 151-186 (HMMA…EEYD), 188-223 (MKDI…HEDE), 229-264 (WVAT…SDYD), and 265-300 (HAEA…FVGS). Residues Asp-81, Asp-83, Asp-85, Glu-92, Asp-117, Asn-119, Asp-121, Met-123, and Glu-128 each contribute to the Ca(2+) site. N-linked (GlcNAc...) asparagine glycosylation is present at Asn-131. Ca(2+) is bound by residues Asp-164, Asn-166, Asp-168, Glu-175, Asp-201, Asn-203, Asp-205, Glu-212, Asp-242, Asn-244, Asp-246, Lys-248, Glu-253, Asp-278, Asn-280, Asp-282, Lys-284, and Glu-289. Positions 312-315 (HDEF) match the Prevents secretion from ER motif.

It belongs to the CREC family. Interacts with ggcx.

It is found in the endoplasmic reticulum membrane. The protein localises to the golgi apparatus. The protein resides in the secreted. It localises to the melanosome. Its subcellular location is the sarcoplasmic reticulum lumen. In terms of biological role, involved in regulation of vitamin K-dependent carboxylation of multiple N-terminal glutamate residues. Seems to inhibit gamma-carboxylase ggcx. Binds 7 calcium ions with a low affinity. This chain is Calumenin-A (calua), found in Salmo salar (Atlantic salmon).